Reading from the N-terminus, the 126-residue chain is Profilin (126 aa).

The protein belongs to the profilin family. As to quaternary structure, occurs in many kinds of cells as a complex with monomeric actin in a 1:1 ratio.

Its subcellular location is the cytoplasm. The protein localises to the cytoskeleton. Binds to actin and affects the structure of the cytoskeleton. At high concentrations, profilin prevents the polymerization of actin, whereas it enhances it at low concentrations. By binding to PIP2, it inhibits the formation of IP3 and DG. This is Profilin (PFY1) from Saccharomyces cerevisiae (strain ATCC 204508 / S288c) (Baker's yeast).